Consider the following 639-residue polypeptide: ADP-ribosylation factor-binding protein GGA1 (639 aa).

At methionine 1 the chain carries N-acetylmethionine. One can recognise a VHS domain in the interval alanine 17–serine 147. Residues lysine 114–aspartate 274 are interaction with ARF3. One can recognise a GAT domain in the interval aspartate 171–arginine 299. The residue at position 185 (serine 185) is a Phosphoserine. The unstructured hinge stretch occupies residues glycine 300 to proline 509. Disordered regions lie at residues leucine 320–aspartate 421 and serine 434–proline 492. Serine 355 carries the phosphoserine; by CK2 modification. The short motif at aspartate 358–methionine 362 is the Autoinhibitory element. The span at glycine 381 to alanine 390 shows a compositional bias: polar residues. Serine 418 carries the post-translational modification Phosphoserine. Over residues serine 462–serine 480 the composition is skewed to low complexity. Over residues proline 481 to proline 490 the composition is skewed to pro residues. The GAE domain maps to serine 510–proline 631.

Belongs to the GGA protein family. Monomer. Interacts with GGA2 and GGA3. Binds to clathrin and activated ARFs, including ARF1, ARF5 and ARF6. Interacts with RABEP1. Interacts with RABGEF1. Interacts with the type-I membrane proteins LRP3, M6PR/CD-MPR and IGF2R/CI-MPR. Interacts (via N-terminal VHS domain) with SORL1/sorLA and SORT1 (via C-terminal cytosolic domain). Interacts with EPN4. Interacts with CCDC91. Interacts with HEATR5B/p200a. Interacts with SYNRG/gamma-synergin. Interacts (via GAE doamin) with NECAP1 and NECAP2. Interacts (via GAE domain) with AFTPH/aftiphilin. Interacts with TSG101 and UBC. Interacts with RNF11. Interacts (via VHS domain) with BACE1 (via DXXLL motif); the interaction highly increases when BACE1 is phosphorylated at 'Ser-498'. Interacts with CNST. Interacts with ADRA2B. Interacts with ARL3; the interaction recruits, in collaboration with RABEP1, PKD1:PKD2 complex to trans-Golgi network and is required for ciliary targeting. Post-translationally, phosphorylated by CK2 and dephosphorylated by PP2A. Phosphorylation of GGA1 allows the internal DXXLL motif to bind the VHS domain and to inhibit the recognition of cargo signals. In terms of processing, ubiquitinated. As to expression, ubiquitously expressed.

The protein resides in the golgi apparatus. The protein localises to the trans-Golgi network membrane. It is found in the endosome membrane. It localises to the early endosome membrane. Plays a role in protein sorting and trafficking between the trans-Golgi network (TGN) and endosomes. Mediates the ARF-dependent recruitment of clathrin to the TGN and binds ubiquitinated proteins and membrane cargo molecules with a cytosolic acidic cluster-dileucine (DXXLL) motif. Mediates export of the GPCR receptor ADRA2B to the cell surface. Required for targeting PKD1:PKD2 complex from the trans-Golgi network to the cilium membrane. Regulates retrograde transport of proteins such as phosphorylated form of BACE1 from endosomes to the trans-Golgi network. In Homo sapiens (Human), this protein is ADP-ribosylation factor-binding protein GGA1 (GGA1).